We begin with the raw amino-acid sequence, 145 residues long: uncharacterized protein (145 aa).

This is an uncharacterized protein from Methanothrix soehngenii (Methanosaeta concilii).